A 52-amino-acid polypeptide reads, in one-letter code: Alpha-1-antiproteinase 3 (52 aa).

Positions 1-20 (EDLQGDAVPEEXATKDDNEH) are disordered.

The protein belongs to the serpin family. In terms of processing, N-glycosylated; contains glycans with bi- and triantennary side chains. In terms of tissue distribution, plasma.

It is found in the secreted. The protein is Alpha-1-antiproteinase 3 of Equus caballus (Horse).